We begin with the raw amino-acid sequence, 285 residues long: 4-hydroxybenzoate octaprenyltransferase (285 aa).

Transmembrane regions (helical) follow at residues 19–39, 42–62, 82–102, 104–124, 136–156, 166–186, 210–230, 233–253, and 265–285; these read IGSLLLLWPTLWALFLAADGL, WHVLIVFVLGVVFMRSAGCVI, LPSGLISSKEALSLFAVLVVC, FLLVLTMNTLTIMLSGIGIVL, YLPQFVLGLAFSWAIPMAYAA, WLLFVINALWTIAYDTQYAMV, IIGLLQLSVLALLIVLGSQLA, GIYYWGILAAAGFFVYQQWLI, and FLNNNYVGGLIFIAISASVLI.

This sequence belongs to the UbiA prenyltransferase family. Mg(2+) serves as cofactor.

The protein resides in the cell inner membrane. It carries out the reaction all-trans-octaprenyl diphosphate + 4-hydroxybenzoate = 4-hydroxy-3-(all-trans-octaprenyl)benzoate + diphosphate. It participates in cofactor biosynthesis; ubiquinone biosynthesis. Catalyzes the prenylation of para-hydroxybenzoate (PHB) with an all-trans polyprenyl group. Mediates the second step in the final reaction sequence of ubiquinone-8 (UQ-8) biosynthesis, which is the condensation of the polyisoprenoid side chain with PHB, generating the first membrane-bound Q intermediate 3-octaprenyl-4-hydroxybenzoate. In Aliivibrio fischeri (strain ATCC 700601 / ES114) (Vibrio fischeri), this protein is 4-hydroxybenzoate octaprenyltransferase.